Reading from the N-terminus, the 420-residue chain is Serine/threonine-protein kinase PCRK2 (420 aa).

The tract at residues 1–64 (MKCFLFPLGD…SNTSMSAREN (64 aa)) is disordered. Over residues 22–36 (SPTSNFSDVNKSGSD) the composition is skewed to polar residues. Positions 42-58 (VSGTSTVSSTGRNSNTS) are enriched in low complexity. Thr70 is modified (phosphothreonine). Residues 81-366 (FSRSGMIGEG…EVLEMVTKIV (286 aa)) form the Protein kinase domain. ATP is bound by residues 87-95 (IGEGGFGCV) and Lys115. The residue at position 164 (Tyr164) is a Phosphotyrosine. Asp215 serves as the catalytic Proton acceptor. Ser219 and Ser249 each carry phosphoserine. Thr250 and Thr255 each carry phosphothreonine. Tyr263 is subject to Phosphotyrosine. The segment at 369-396 (SSPGNGGKKPQLVPLKSQETSRVEEGKN) is disordered. Residues 387 to 396 (ETSRVEEGKN) show a composition bias toward basic and acidic residues.

The protein belongs to the protein kinase superfamily. Ser/Thr protein kinase family. As to quaternary structure, interacts with FLS2.

It localises to the cell membrane. The catalysed reaction is L-seryl-[protein] + ATP = O-phospho-L-seryl-[protein] + ADP + H(+). It carries out the reaction L-threonyl-[protein] + ATP = O-phospho-L-threonyl-[protein] + ADP + H(+). Functionally, functions redundantly with PCRK1 in basal resistance against bacterial pathogens and in regulation of plant immunity. Functions together with PCRK1 downstream of the pathogen-associated molecular pattern (PAMP) receptor FLS2. Contributes to the induction of SARD1 and CBP60G, which are transcriptional activator of ICS1, an enzyme involved in salicylate (SA) biosynthesis upon pathogen attack. This Arabidopsis thaliana (Mouse-ear cress) protein is Serine/threonine-protein kinase PCRK2.